The chain runs to 234 residues: HTH-type transcriptional regulator ArcR (234 aa).

40-129 (VRHYTKGQVI…MAFLCKANDD (90 aa)) serves as a coordination point for a nucleoside 3',5'-cyclic phosphate. The 74-residue stretch at 155 to 228 (KFAKDRIIKL…HKNWLVSKHL (74 aa)) folds into the HTH crp-type domain. The H-T-H motif DNA-binding region spans 188 to 207 (IQLMSDMAGISRETAGHIIH).

It is found in the cytoplasm. Its function is as follows. Positively regulates the expression of the arcABDCR operon under anaerobic conditions, thus playing an essential role in arginine catabolism. May also control the expression of genes encoding proteins which are involved in anaerobic metabolism. Can bind cyclic AMP. The polypeptide is HTH-type transcriptional regulator ArcR (arcR) (Staphylococcus aureus (strain USA300 / TCH1516)).